The following is a 230-amino-acid chain: Ribonuclease 3 (230 aa).

Positions 5–134 (NDTISKVINY…LIGAIYIDGG (130 aa)) constitute an RNase III domain. Residue E47 participates in Mg(2+) binding. D51 is a catalytic residue. 2 residues coordinate Mg(2+): N120 and E123. E123 is an active-site residue. Residues 159 to 228 (DPKTSLQEWT…AELILEKIKK (70 aa)) enclose the DRBM domain.

This sequence belongs to the ribonuclease III family. Homodimer. Mg(2+) is required as a cofactor.

Its subcellular location is the cytoplasm. It carries out the reaction Endonucleolytic cleavage to 5'-phosphomonoester.. In terms of biological role, digests double-stranded RNA. Involved in the processing of primary rRNA transcript to yield the immediate precursors to the large and small rRNAs (23S and 16S). Processes some mRNAs, and tRNAs when they are encoded in the rRNA operon. Processes pre-crRNA and tracrRNA of type II CRISPR loci if present in the organism. The protein is Ribonuclease 3 of Wolbachia pipientis subsp. Culex pipiens (strain wPip).